The primary structure comprises 148 residues: D-aminoacyl-tRNA deacylase (148 aa).

The Gly-cisPro motif, important for rejection of L-amino acids signature appears at 137-138 (GP).

The protein belongs to the DTD family. Homodimer.

Its subcellular location is the cytoplasm. It catalyses the reaction glycyl-tRNA(Ala) + H2O = tRNA(Ala) + glycine + H(+). The enzyme catalyses a D-aminoacyl-tRNA + H2O = a tRNA + a D-alpha-amino acid + H(+). Functionally, an aminoacyl-tRNA editing enzyme that deacylates mischarged D-aminoacyl-tRNAs. Also deacylates mischarged glycyl-tRNA(Ala), protecting cells against glycine mischarging by AlaRS. Acts via tRNA-based rather than protein-based catalysis; rejects L-amino acids rather than detecting D-amino acids in the active site. By recycling D-aminoacyl-tRNA to D-amino acids and free tRNA molecules, this enzyme counteracts the toxicity associated with the formation of D-aminoacyl-tRNA entities in vivo and helps enforce protein L-homochirality. The protein is D-aminoacyl-tRNA deacylase of Ligilactobacillus salivarius (strain UCC118) (Lactobacillus salivarius).